We begin with the raw amino-acid sequence, 238 residues long: Zinc import ATP-binding protein ZnuC (238 aa).

Positions 5–220 (VKLKNVCVNL…LEFISIFGLK (216 aa)) constitute an ABC transporter domain. Position 37 to 44 (37 to 44 (GPNGAGKS)) interacts with ATP.

This sequence belongs to the ABC transporter superfamily. Zinc importer (TC 3.A.1.15.5) family. The complex is composed of two ATP-binding proteins (ZnuC), two transmembrane proteins (ZnuB) and a solute-binding protein (ZnuA).

It is found in the cell inner membrane. The catalysed reaction is Zn(2+)(out) + ATP(in) + H2O(in) = Zn(2+)(in) + ADP(in) + phosphate(in) + H(+)(in). Functionally, part of the ABC transporter complex ZnuABC involved in zinc import. Responsible for energy coupling to the transport system. The sequence is that of Zinc import ATP-binding protein ZnuC from Buchnera aphidicola subsp. Acyrthosiphon pisum (strain APS) (Acyrthosiphon pisum symbiotic bacterium).